The following is a 192-amino-acid chain: Peptidyl-tRNA hydrolase (192 aa).

A tRNA-binding site is contributed by Y17. Catalysis depends on H22, which acts as the Proton acceptor. The tRNA site is built by Y68, N70, and N116.

Belongs to the PTH family. Monomer.

The protein resides in the cytoplasm. It catalyses the reaction an N-acyl-L-alpha-aminoacyl-tRNA + H2O = an N-acyl-L-amino acid + a tRNA + H(+). In terms of biological role, hydrolyzes ribosome-free peptidyl-tRNAs (with 1 or more amino acids incorporated), which drop off the ribosome during protein synthesis, or as a result of ribosome stalling. Its function is as follows. Catalyzes the release of premature peptidyl moieties from peptidyl-tRNA molecules trapped in stalled 50S ribosomal subunits, and thus maintains levels of free tRNAs and 50S ribosomes. The chain is Peptidyl-tRNA hydrolase from Mycobacterium sp. (strain JLS).